The primary structure comprises 499 residues: Pyruvate kinase (499 aa).

Residue Arg50 participates in substrate binding. Residues Asn52, Ser54, Asp84, and Thr85 each contribute to the K(+) site. Asn52–His55 is an ATP binding site. ATP is bound at residue Arg91. Glu241 serves as a coordination point for Mg(2+). Positions 264, 265, and 297 each coordinate substrate. Residue Asp265 participates in Mg(2+) binding.

This sequence belongs to the pyruvate kinase family. As to quaternary structure, homotetramer. Mg(2+) serves as cofactor. It depends on K(+) as a cofactor.

It catalyses the reaction pyruvate + ATP = phosphoenolpyruvate + ADP + H(+). It functions in the pathway carbohydrate degradation; glycolysis; pyruvate from D-glyceraldehyde 3-phosphate: step 5/5. With respect to regulation, activated by fructose 2,6-bisphosphate, activated by the effector in a non cooperative manner. This chain is Pyruvate kinase (PYK), found in Leishmania mexicana.